The following is a 202-amino-acid chain: Small ribosomal subunit protein uS4c (202 aa).

A disordered region spans residues 13–37 (RRPGVSPGLTSKTLKSKSNYIDRST). Residues 20 to 37 (GLTSKTLKSKSNYIDRST) are compositionally biased toward polar residues. In terms of domain architecture, S4 RNA-binding spans 90-153 (MRLDNTIFRL…ESRSMISKNI (64 aa)).

The protein belongs to the universal ribosomal protein uS4 family. In terms of assembly, part of the 30S ribosomal subunit. Contacts protein S5. The interaction surface between S4 and S5 is involved in control of translational fidelity.

It localises to the plastid. Its subcellular location is the chloroplast. In terms of biological role, one of the primary rRNA binding proteins, it binds directly to 16S rRNA where it nucleates assembly of the body of the 30S subunit. Functionally, with S5 and S12 plays an important role in translational accuracy. The sequence is that of Small ribosomal subunit protein uS4c (rps4) from Takakia lepidozioides (Moss).